We begin with the raw amino-acid sequence, 812 residues long: Lon protease (812 aa).

The region spanning 22–215 is the Lon N-terminal domain; sequence YAVLPLRDIV…KALSFMEAEI (194 aa). 367–374 serves as a coordination point for ATP; that stretch reads GPPGVGKT. In terms of domain architecture, Lon proteolytic spans 602–783; the sequence is EDQVGVVTGL…GEVLKHTLVR (182 aa). Residues Ser689 and Lys732 contribute to the active site. A disordered region spans residues 787 to 812; the sequence is PIEWTEQENPTAVPPVEDEAGASLAH.

Belongs to the peptidase S16 family. As to quaternary structure, homohexamer. Organized in a ring with a central cavity.

Its subcellular location is the cytoplasm. The enzyme catalyses Hydrolysis of proteins in presence of ATP.. Its function is as follows. ATP-dependent serine protease that mediates the selective degradation of mutant and abnormal proteins as well as certain short-lived regulatory proteins. Required for cellular homeostasis and for survival from DNA damage and developmental changes induced by stress. Degrades polypeptides processively to yield small peptide fragments that are 5 to 10 amino acids long. Binds to DNA in a double-stranded, site-specific manner. This Brucella suis biovar 1 (strain 1330) protein is Lon protease.